Here is a 113-residue protein sequence, read N- to C-terminus: U11-theraphotoxin-Hhn1a (113 aa).

A signal peptide spans 1–21 (MNTVRVTFLLVFVLAVSLGQA). A propeptide spanning residues 22–74 (DKDENRMEMQEKTEQGESYLDFAENLLLQKLEELEAKLLEEDSEESRNSRQKR) is cleaved from the precursor. 3 disulfide bridges follow: Cys75/Cys90, Cys82/Cys95, and Cys89/Cys110.

It belongs to the neurotoxin 14 (magi-1) family. 01 (HNTX-16) subfamily. Expressed by the venom gland.

It is found in the secreted. Its function is as follows. Probable ion channel inhibitor. In Cyriopagopus hainanus (Chinese bird spider), this protein is U11-theraphotoxin-Hhn1a.